Consider the following 349-residue polypeptide: UDP-N-acetylenolpyruvoylglucosamine reductase (349 aa).

The FAD-binding PCMH-type domain maps to 24-197 (FGIDATARFA…VAVTFRLPKR (174 aa)). The active site involves Arg173. The Proton donor role is filled by Ser249. Glu345 is an active-site residue.

This sequence belongs to the MurB family. Requires FAD as cofactor.

The protein localises to the cytoplasm. It catalyses the reaction UDP-N-acetyl-alpha-D-muramate + NADP(+) = UDP-N-acetyl-3-O-(1-carboxyvinyl)-alpha-D-glucosamine + NADPH + H(+). Its pathway is cell wall biogenesis; peptidoglycan biosynthesis. Functionally, cell wall formation. The sequence is that of UDP-N-acetylenolpyruvoylglucosamine reductase from Burkholderia ambifaria (strain ATCC BAA-244 / DSM 16087 / CCUG 44356 / LMG 19182 / AMMD) (Burkholderia cepacia (strain AMMD)).